The primary structure comprises 432 residues: Alcohol acyltransferase 9 (432 aa).

Residues His-156 and Asp-379 each act as proton acceptor in the active site.

It belongs to the plant acyltransferase family.

The catalysed reaction is 2-(methylsulfanyl)acetyl-CoA + butan-1-ol = butyl 2-(methylsulfanyl)acetate + CoA. The enzyme catalyses ethanol + acetyl-CoA = ethyl acetate + CoA. It catalyses the reaction butan-1-ol + acetyl-CoA = butyl acetate + CoA. It carries out the reaction butan-1-ol + propanoyl-CoA = butyl propanoate + CoA. Functionally, involved in the biosynthesis of volatile esters which confer kiwifruit flavor. Alcohol acyl transferase that can use a wide range of alcohols as substrate to produce esters. Exhibits acetyl-CoA:alcohol O-acyltransferase activity. The polypeptide is Alcohol acyltransferase 9 (Actinidia chinensis var. chinensis (Chinese soft-hair kiwi)).